Consider the following 545-residue polypeptide: GMP synthase [glutamine-hydrolyzing] (545 aa).

Residues 17–211 (TVLVLDMGSQ…ATKICGARPD (195 aa)) enclose the Glutamine amidotransferase type-1 domain. Cysteine 93 functions as the Nucleophile in the catalytic mechanism. Active-site residues include histidine 185 and glutamate 187. Residues 212–420 (WKMDDFSARE…LGIHEELIGR (209 aa)) enclose the GMPS ATP-PPase domain. ATP is bound at residue 240-246 (SGGVDST). Positions 313, 482, 537, and 543 each coordinate XMP.

As to quaternary structure, homodimer. Requires Mg(2+) as cofactor.

The protein localises to the cytoplasm. Its subcellular location is the cytosol. The enzyme catalyses XMP + L-glutamine + ATP + H2O = GMP + L-glutamate + AMP + diphosphate + 2 H(+). It functions in the pathway purine metabolism; GMP biosynthesis; GMP from XMP (L-Gln route): step 1/1. In terms of biological role, catalyzes the conversion of xanthine monophosphate (XMP) to GMP in the presence of glutamine and ATP through an adenyl-XMP intermediate. The polypeptide is GMP synthase [glutamine-hydrolyzing] (GUA1) (Gibberella zeae (strain ATCC MYA-4620 / CBS 123657 / FGSC 9075 / NRRL 31084 / PH-1) (Wheat head blight fungus)).